We begin with the raw amino-acid sequence, 93 residues long: Acylphosphatase (93 aa).

The Acylphosphatase-like domain occupies 5–91 (RAHFLVKGFV…RGETTFRIRS (87 aa)). Residues Arg20 and Asn38 contribute to the active site.

This sequence belongs to the acylphosphatase family.

It carries out the reaction an acyl phosphate + H2O = a carboxylate + phosphate + H(+). The protein is Acylphosphatase (acyP) of Moorella thermoacetica (strain ATCC 39073 / JCM 9320).